A 410-amino-acid chain; its full sequence is Shaggy-related protein kinase epsilon (410 aa).

N-acetylalanine is present on alanine 2. The Protein kinase domain occupies 74-358; it reads YMAERIVGQG…AMEAIVHPFF (285 aa). Residues 80–88 and lysine 103 each bind ATP; that span reads VGQGSFGIV. The active-site Proton acceptor is the aspartate 199. Tyrosine 234 is subject to Phosphotyrosine.

This sequence belongs to the protein kinase superfamily. CMGC Ser/Thr protein kinase family. GSK-3 subfamily. Binds to KIB1. Autophosphorylated mainly on threonine and serine residues.

The enzyme catalyses L-seryl-[protein] + ATP = O-phospho-L-seryl-[protein] + ADP + H(+). The catalysed reaction is L-threonyl-[protein] + ATP = O-phospho-L-threonyl-[protein] + ADP + H(+). May mediate extracellular signals to regulate transcription in differentiating cells. This Arabidopsis thaliana (Mouse-ear cress) protein is Shaggy-related protein kinase epsilon (ASK5).